A 317-amino-acid chain; its full sequence is Fe-S cluster assembly protein DRE2 (317 aa).

The N-terminal SAM-like domain stretch occupies residues 1 to 131 (MERMLFLSPP…KPNFGAQDTV (131 aa)). The interval 132-209 (PLKLGKKKKA…EEALMDEEDM (78 aa)) is linker. [2Fe-2S] cluster contacts are provided by Cys-219, Cys-230, Cys-233, and Cys-235. Residues 219–235 (CRPKAGKRRRACKDCTC) form a fe-S binding site A region. 4 residues coordinate [4Fe-4S] cluster: Cys-280, Cys-283, Cys-291, and Cys-294. Short sequence motifs (cx2C motif) lie at residues 280–283 (CGNC) and 291–294 (CDGC). Residues 280-294 (CGNCALGDAFRCDGC) form a fe-S binding site B region.

The protein belongs to the anamorsin family. In terms of assembly, monomer. Interacts with TAH18. Interacts with MIA40. It depends on [2Fe-2S] cluster as a cofactor. [4Fe-4S] cluster is required as a cofactor.

The protein resides in the cytoplasm. It localises to the mitochondrion intermembrane space. Functionally, component of the cytosolic iron-sulfur (Fe-S) protein assembly (CIA) machinery required for the maturation of extramitochondrial Fe-S proteins. Part of an electron transfer chain functioning in an early step of cytosolic Fe-S biogenesis, facilitating the de novo assembly of a [4Fe-4S] cluster on the scaffold complex CFD1-NBP35. Electrons are transferred to DRE2 from NADPH via the FAD- and FMN-containing protein TAH18. TAH18-DRE2 are also required for the assembly of the diferric tyrosyl radical cofactor of ribonucleotide reductase (RNR), probably by providing electrons for reduction during radical cofactor maturation in the catalytic small subunit RNR2. The sequence is that of Fe-S cluster assembly protein DRE2 from Uncinocarpus reesii (strain UAMH 1704).